A 146-amino-acid polypeptide reads, in one-letter code: Ribosome maturation factor RimP (146 aa).

This sequence belongs to the RimP family.

The protein resides in the cytoplasm. In terms of biological role, required for maturation of 30S ribosomal subunits. The chain is Ribosome maturation factor RimP from Helicobacter pylori (strain HPAG1).